The following is a 148-amino-acid chain: Deoxyuridine 5'-triphosphate nucleotidohydrolase (148 aa).

Substrate contacts are provided by residues 67-69 (RSG), Asn-80, 84-86 (LID), and Met-94.

Belongs to the dUTPase family. The cofactor is Mg(2+).

The catalysed reaction is dUTP + H2O = dUMP + diphosphate + H(+). The protein operates within pyrimidine metabolism; dUMP biosynthesis; dUMP from dCTP (dUTP route): step 2/2. This enzyme is involved in nucleotide metabolism: it produces dUMP, the immediate precursor of thymidine nucleotides and it decreases the intracellular concentration of dUTP so that uracil cannot be incorporated into DNA. This is Deoxyuridine 5'-triphosphate nucleotidohydrolase from Burkholderia ambifaria (strain MC40-6).